The chain runs to 313 residues: Porphobilinogen deaminase (313 aa).

At C241 the chain carries S-(dipyrrolylmethanemethyl)cysteine.

This sequence belongs to the HMBS family. Monomer. It depends on dipyrromethane as a cofactor.

The catalysed reaction is 4 porphobilinogen + H2O = hydroxymethylbilane + 4 NH4(+). The protein operates within porphyrin-containing compound metabolism; protoporphyrin-IX biosynthesis; coproporphyrinogen-III from 5-aminolevulinate: step 2/4. Its function is as follows. Tetrapolymerization of the monopyrrole PBG into the hydroxymethylbilane pre-uroporphyrinogen in several discrete steps. The sequence is that of Porphobilinogen deaminase from Sulfurimonas denitrificans (strain ATCC 33889 / DSM 1251) (Thiomicrospira denitrificans (strain ATCC 33889 / DSM 1251)).